A 338-amino-acid chain; its full sequence is Queuosine 5'-phosphate N-glycosylase/hydrolase (338 aa).

Position 1 is an N-acetylmethionine (Met1). 6 residues coordinate queuine: His51, Phe235, Asp237, Asp311, Tyr312, and Asp316. Asp237 acts as the Nucleophile or transition state stabilizer in catalysis.

The protein belongs to the QNG1 protein family. In terms of tissue distribution, highly expressed in liver.

The enzyme catalyses queuosine 5'-phosphate + H2O = queuine + D-ribose 5-phosphate. Functionally, catalyzes the hydrolysis of queuosine 5'-phosphate, releasing the nucleobase queuine (q). Is required for salvage of queuine from exogenous queuosine (Q) that is imported and then converted to queuosine 5'-phosphate intracellularly. The sequence is that of Queuosine 5'-phosphate N-glycosylase/hydrolase from Mus musculus (Mouse).